The chain runs to 246 residues: Probable phosphatase AHA_1344 (246 aa).

9 residues coordinate Zn(2+): H8, H10, H16, H41, E74, H102, H132, D193, and H195.

Belongs to the PHP family. Zn(2+) serves as cofactor.

This is Probable phosphatase AHA_1344 from Aeromonas hydrophila subsp. hydrophila (strain ATCC 7966 / DSM 30187 / BCRC 13018 / CCUG 14551 / JCM 1027 / KCTC 2358 / NCIMB 9240 / NCTC 8049).